A 389-amino-acid chain; its full sequence is Stilbene synthase 1 (389 aa).

A substrate-binding site is contributed by lysine 55–arginine 58. Cysteine 164 is a catalytic residue. Substrate is bound by residues leucine 267 and glycine 305–arginine 307.

It belongs to the thiolase-like superfamily. Chalcone/stilbene synthases family. As to quaternary structure, homodimer.

The protein localises to the cytoplasm. It catalyses the reaction 4-coumaroyl-CoA + 3 malonyl-CoA + 3 H(+) = trans-resveratrol + 4 CO2 + 4 CoA. It participates in phytoalexin biosynthesis; 3,4',5-trihydroxystilbene biosynthesis; 3,4',5-trihydroxystilbene from trans-4-coumarate: step 2/2. The protein is Stilbene synthase 1 of Arachis hypogaea (Peanut).